Here is a 193-residue protein sequence, read N- to C-terminus: NADH-quinone oxidoreductase subunit B (193 aa).

The [4Fe-4S] cluster site is built by Cys-72, Cys-73, Cys-137, and Cys-167.

Belongs to the complex I 20 kDa subunit family. As to quaternary structure, NDH-1 is composed of 14 different subunits. Subunits NuoB, C, D, E, F, and G constitute the peripheral sector of the complex. The cofactor is [4Fe-4S] cluster.

The protein localises to the cell inner membrane. It catalyses the reaction a quinone + NADH + 5 H(+)(in) = a quinol + NAD(+) + 4 H(+)(out). Its function is as follows. NDH-1 shuttles electrons from NADH, via FMN and iron-sulfur (Fe-S) centers, to quinones in the respiratory chain. The immediate electron acceptor for the enzyme in this species is believed to be ubiquinone. Couples the redox reaction to proton translocation (for every two electrons transferred, four hydrogen ions are translocated across the cytoplasmic membrane), and thus conserves the redox energy in a proton gradient. The sequence is that of NADH-quinone oxidoreductase subunit B from Rhizobium rhizogenes (strain K84 / ATCC BAA-868) (Agrobacterium radiobacter).